A 124-amino-acid polypeptide reads, in one-letter code: Small ribosomal subunit protein bS6 (124 aa).

Residues 96 to 124 form a disordered region; the sequence is ETGPSPMMKEVQREEAKKAAAAQPTEAQA. Low complexity predominate over residues 114–124; that stretch reads AAAAQPTEAQA.

This sequence belongs to the bacterial ribosomal protein bS6 family.

Its function is as follows. Binds together with bS18 to 16S ribosomal RNA. The polypeptide is Small ribosomal subunit protein bS6 (Burkholderia vietnamiensis (strain G4 / LMG 22486) (Burkholderia cepacia (strain R1808))).